A 72-amino-acid polypeptide reads, in one-letter code: LITAF domain-containing protein (72 aa).

Residues 1 to 71 enclose the LITAF domain; it reads MPVQAVCPYC…CQRELFYYHR (71 aa). Positions 7 and 10 each coordinate Zn(2+). Residues 22 to 45 form a membrane-binding amphipathic helix region; the sequence is PGALTWLLCTTLFLFGYVLGCCFL. Zn(2+) contacts are provided by Cys59 and Cys62.

It belongs to the CDIP1/LITAF family.

The protein resides in the membrane. The sequence is that of LITAF domain-containing protein from Homo sapiens (Human).